Consider the following 344-residue polypeptide: Arginine N-succinyltransferase (344 aa).

Leu-125 contributes to the succinyl-CoA binding site. His-229 functions as the Proton donor in the catalytic mechanism.

This sequence belongs to the arginine N-succinyltransferase family.

The enzyme catalyses succinyl-CoA + L-arginine = N(2)-succinyl-L-arginine + CoA + H(+). It participates in amino-acid degradation; L-arginine degradation via AST pathway; L-glutamate and succinate from L-arginine: step 1/5. Functionally, catalyzes the transfer of succinyl-CoA to arginine to produce N(2)-succinylarginine. The polypeptide is Arginine N-succinyltransferase (Shigella boydii serotype 18 (strain CDC 3083-94 / BS512)).